The sequence spans 155 residues: MSEQNNTEMAFQIQRIYTKDVSFEAPNAPHVFQKDWQPEVKLDLDTASSQLADDVYEVVLRVTVTASLGEETAFLCEVQQAGIFSISGIEGTQMAHCLGAYCPNILFPYARECITSLVSRGTFPQLNLAPVNFDALFMNYLQQQAGEGTEEHQDA.

Belongs to the SecB family. Homotetramer, a dimer of dimers. One homotetramer interacts with 1 SecA dimer.

The protein localises to the cytoplasm. Its function is as follows. One of the proteins required for the normal export of preproteins out of the cell cytoplasm. It is a molecular chaperone that binds to a subset of precursor proteins, maintaining them in a translocation-competent state. It also specifically binds to its receptor SecA. This chain is Protein-export protein SecB, found in Salmonella heidelberg (strain SL476).